A 365-amino-acid polypeptide reads, in one-letter code: Glycolaldehyde reductase (365 aa).

8 residues coordinate NAD(+): aspartate 37, glycine 94, lysine 95, threonine 116, serine 119, serine 125, leucine 127, and tyrosine 131. Zn(2+) contacts are provided by aspartate 171, histidine 254, and histidine 271.

It belongs to the iron-containing alcohol dehydrogenase family. It depends on Zn(2+) as a cofactor.

It carries out the reaction ethylene glycol + NAD(+) = glycolaldehyde + NADH + H(+). Its activity is regulated as follows. Is subject to substrate inhibition. Oxidoreductase involved in the non-carboxylating pentose bisphosphate pathway, a nucleoside degradation pathway present in some halophilic archaea. Catalyzes the reduction of glycolaldehyde to ethylene glycol. Cannot catalyze the oxidation of glycerol 1-phosphate nor the reduction of dihydroxyacetone phosphate (DHAP). The chain is Glycolaldehyde reductase from Halobacterium salinarum (strain ATCC 700922 / JCM 11081 / NRC-1) (Halobacterium halobium).